We begin with the raw amino-acid sequence, 123 residues long: uncharacterized protein (123 aa).

3 consecutive transmembrane segments (helical) span residues 7–29, 44–66, and 79–101; these read VKHL…FDAV, FFIH…VHRI, and LGLY…AAMA.

It localises to the cell membrane. This is an uncharacterized protein from Bacillus subtilis (strain 168).